Reading from the N-terminus, the 463-residue chain is Argininosuccinate lyase (463 aa).

The protein belongs to the lyase 1 family. Argininosuccinate lyase subfamily.

The protein resides in the cytoplasm. It catalyses the reaction 2-(N(omega)-L-arginino)succinate = fumarate + L-arginine. Its pathway is amino-acid biosynthesis; L-arginine biosynthesis; L-arginine from L-ornithine and carbamoyl phosphate: step 3/3. In Chlorobaculum tepidum (strain ATCC 49652 / DSM 12025 / NBRC 103806 / TLS) (Chlorobium tepidum), this protein is Argininosuccinate lyase.